Consider the following 601-residue polypeptide: Aspartate--tRNA ligase (601 aa).

Residue E183 coordinates L-aspartate. Positions 207-210 are aspartate; the sequence is QIFK. R229 provides a ligand contact to L-aspartate. ATP-binding positions include 229-231 and Q238; that span reads RDE. H457 is an L-aspartate binding site. An ATP-binding site is contributed by E497. R504 provides a ligand contact to L-aspartate. 549 to 552 lines the ATP pocket; the sequence is GIDR.

The protein belongs to the class-II aminoacyl-tRNA synthetase family. Type 1 subfamily. Homodimer.

It localises to the cytoplasm. The enzyme catalyses tRNA(Asp) + L-aspartate + ATP = L-aspartyl-tRNA(Asp) + AMP + diphosphate. Its function is as follows. Catalyzes the attachment of L-aspartate to tRNA(Asp) in a two-step reaction: L-aspartate is first activated by ATP to form Asp-AMP and then transferred to the acceptor end of tRNA(Asp). The polypeptide is Aspartate--tRNA ligase (Leptospira interrogans serogroup Icterohaemorrhagiae serovar Lai (strain 56601)).